The primary structure comprises 270 residues: Putative phosphoenolpyruvate synthase regulatory protein (270 aa).

Position 151–158 (151–158 (GVSRCGKT)) interacts with ADP.

Belongs to the pyruvate, phosphate/water dikinase regulatory protein family. PSRP subfamily.

The catalysed reaction is [pyruvate, water dikinase] + ADP = [pyruvate, water dikinase]-phosphate + AMP + H(+). It carries out the reaction [pyruvate, water dikinase]-phosphate + phosphate + H(+) = [pyruvate, water dikinase] + diphosphate. Bifunctional serine/threonine kinase and phosphorylase involved in the regulation of the phosphoenolpyruvate synthase (PEPS) by catalyzing its phosphorylation/dephosphorylation. In Methylobacillus flagellatus (strain ATCC 51484 / DSM 6875 / VKM B-1610 / KT), this protein is Putative phosphoenolpyruvate synthase regulatory protein.